We begin with the raw amino-acid sequence, 366 residues long: MSGLVKAKRYDWKDSNLAMFGSALDKSVKKESALKEAAWKGVGEKVGLKIWRIVNFKVTEWPEKDYGSFFSGDSYIILNTYKLKGREELAYDVHFWIGSKSTQDEYCVAAYKTVELDAYLDDAAIQHRDAEGNESDLFLSYFENGLTIMEGGAEMGFNNVKPEEYKARLLHFSGLKKHIVVKEVPLCPQRLKSDDVFILDLGRTLYQWNGTGSNKDERFKAMQYLQNLKAERGAATSKTLEEEHIDKSHEFYTSLTGEDEDLPEDQTDSAAVKTLLRVSDAAGHFKSTVVKTGHIAASDLDSKDVFILDNGSTCFVWVGNGASAQEKRNGLGYAHSHLMKTPHPLIPILRHQRGQASKCFNAALAA.

Gelsolin-like repeat units lie at residues N55–L139, K177–Y252, and K286–K327. The segment at K100 to L116 is actin binding. Residues D104 to C107 are actin-actin interfilament contact point.

It belongs to the villin/gelsolin family. Interacts with actin monomers and filaments. As to expression, expressed in circular and longitudinal muscle, pseudohearts, pharynx and gizzard. Not expressed in seminal vesicles.

The protein localises to the cytoplasm. The protein resides in the cytoskeleton. Its function is as follows. Calcium-regulated protein that binds to the plus (or barbed) ends of actin monomers or filaments, preventing monomer exchange (end-blocking or capping). Can promote the assembly of monomers into filaments (nucleation) as well as sever existing filaments. The sequence is that of Gelsolin-like protein 2 from Lumbricus terrestris (Common earthworm).